Consider the following 375-residue polypeptide: Guanine nucleotide-binding protein subunit beta (375 aa).

WD repeat units lie at residues G63–N93, L105–N135, G154–D185, G202–D233, G246–D276, G293–D323, and S339–A369.

Belongs to the WD repeat G protein beta family. G proteins are composed of 3 units, alpha, beta and gamma.

In terms of biological role, guanine nucleotide-binding proteins (G proteins) are involved as a modulator or transducer in various transmembrane signaling systems. The beta and gamma chains are required for the GTPase activity, for replacement of GDP by GTP, and for G protein-effector interaction. The protein is Guanine nucleotide-binding protein subunit beta of Nicotiana tabacum (Common tobacco).